Reading from the N-terminus, the 338-residue chain is Glycerol-3-phosphate dehydrogenase [NAD(P)+] (338 aa).

NADPH contacts are provided by Ser-13, Trp-14, and Lys-108. Residues Lys-108, Gly-139, and Ser-141 each contribute to the sn-glycerol 3-phosphate site. Ala-143 lines the NADPH pocket. 5 residues coordinate sn-glycerol 3-phosphate: Lys-194, Asp-247, Ser-257, Arg-258, and Asn-259. Lys-194 acts as the Proton acceptor in catalysis. Arg-258 provides a ligand contact to NADPH. NADPH is bound by residues Val-282 and Glu-284.

The protein belongs to the NAD-dependent glycerol-3-phosphate dehydrogenase family.

It is found in the cytoplasm. The catalysed reaction is sn-glycerol 3-phosphate + NAD(+) = dihydroxyacetone phosphate + NADH + H(+). It carries out the reaction sn-glycerol 3-phosphate + NADP(+) = dihydroxyacetone phosphate + NADPH + H(+). The protein operates within membrane lipid metabolism; glycerophospholipid metabolism. Catalyzes the reduction of the glycolytic intermediate dihydroxyacetone phosphate (DHAP) to sn-glycerol 3-phosphate (G3P), the key precursor for phospholipid synthesis. The polypeptide is Glycerol-3-phosphate dehydrogenase [NAD(P)+] (Streptococcus pneumoniae (strain JJA)).